The chain runs to 923 residues: Rap guanine nucleotide exchange factor 3 (923 aa).

The residue at position 79 (Ser-79) is a Phosphoserine. The DEP domain maps to 110-186 (ATCPNLIRDR…RDAQFYRFPG (77 aa)). An interaction with PDE3B region spans residues 218 to 242 (TVALRKPPGQRTDEELDLIFEELLH). 3',5'-cyclic AMP contacts are provided by residues 311–314 (GQLA) and 321–322 (RA). The region spanning 384-518 (NRYTVMSGTP…EQWPERRRCH (135 aa)) is the N-terminal Ras-GEF domain. The interaction with PDE3B stretch occupies residues 398 to 422 (ELLLEAMGPDSSAHDPTETFLSDFL). Phosphoserine is present on residues Ser-528 and Ser-864. The region spanning 662–889 (SAKDLAGQLT…ARISTCSEQS (228 aa)) is the Ras-GEF domain.

Interacts with PDE3B and PIK3R6; form a signaling complex that regulates phosphatidylinositol 3-kinase gamma in angiogenesis. Widely expressed with highest levels in adult kidney, heart, thyroid and brain, and fetal kidney.

It localises to the endomembrane system. Its function is as follows. Guanine nucleotide exchange factor (GEF) for RAP1A and RAP2A small GTPases that is activated by binding cAMP. Through simultaneous binding of PDE3B to RAPGEF3 and PIK3R6 is assembled in a signaling complex in which it activates the PI3K gamma complex and which is involved in angiogenesis. Plays a role in the modulation of the cAMP-induced dynamic control of endothelial barrier function through a pathway that is independent on Rho-mediated signaling. Required for the actin rearrangement at cell-cell junctions, such as stress fibers and junctional actin. In Homo sapiens (Human), this protein is Rap guanine nucleotide exchange factor 3 (RAPGEF3).